Here is a 130-residue protein sequence, read N- to C-terminus: Small ribosomal subunit protein uS8 (130 aa).

The protein belongs to the universal ribosomal protein uS8 family. As to quaternary structure, part of the 30S ribosomal subunit. Contacts proteins S5 and S12.

One of the primary rRNA binding proteins, it binds directly to 16S rRNA central domain where it helps coordinate assembly of the platform of the 30S subunit. The polypeptide is Small ribosomal subunit protein uS8 (Pseudomonas aeruginosa (strain UCBPP-PA14)).